The chain runs to 292 residues: MLPRTLLGLALTAATGLCASLQQVTNWGSNPTNIRMYTYVPDKLATKPAIIVALHGCGGTAPSWYSGTRLPSYADQYGFILIYPGTPNMSNCWGVNDPASLTHGAGGDSLGIVAMVNYTIAKYNADASRVYVMGTSSGGMMTNVMAATYPEVFEAGAAYSGVAHACFAGAASATPFSPNQTCARGLQHTPEEWGNFVRNSYPGYTGRRPRMQIYHGLADNLVYPRCAMEALKQWSNVLGVEFSRNVSGVPSQAYTQIVYGDGSKLVGYMGAGVGHVAPTNEQVMLKFFGLIN.

The first 18 residues, 1 to 18, serve as a signal peptide directing secretion; sequence MLPRTLLGLALTAATGLC. 4 N-linked (GlcNAc...) asparagine glycosylation sites follow: Asn88, Asn117, Asn179, and Asn245.

It belongs to the carbohydrate esterase 1 (CE1) family. Feruloyl esterase type B subfamily.

It localises to the secreted. It catalyses the reaction feruloyl-polysaccharide + H2O = ferulate + polysaccharide.. Its function is as follows. Involved in degradation of plant cell walls. Hydrolyzes of the feruloyl-arabinose ester bond in arabinoxylans as well as the feruloyl-galactose and feruloyl-arabinose ester bonds in pectin. This chain is Feruloyl esterase B (fae-1), found in Neurospora crassa (strain ATCC 24698 / 74-OR23-1A / CBS 708.71 / DSM 1257 / FGSC 987).